A 78-amino-acid polypeptide reads, in one-letter code: Putative membrane protein insertion efficiency factor (78 aa).

Belongs to the UPF0161 family.

It localises to the cell inner membrane. Functionally, could be involved in insertion of integral membrane proteins into the membrane. This is Putative membrane protein insertion efficiency factor from Prochlorococcus marinus (strain MIT 9312).